The sequence spans 106 residues: Nucleoid-associated protein RPD_0086 (106 aa).

This sequence belongs to the YbaB/EbfC family. As to quaternary structure, homodimer.

It localises to the cytoplasm. Its subcellular location is the nucleoid. In terms of biological role, binds to DNA and alters its conformation. May be involved in regulation of gene expression, nucleoid organization and DNA protection. This Rhodopseudomonas palustris (strain BisB5) protein is Nucleoid-associated protein RPD_0086.